The following is a 413-amino-acid chain: N-acylneuraminate cytidylyltransferase (413 aa).

It belongs to the CMP-NeuNAc synthase family. Mg(2+) is required as a cofactor. It depends on Mn(2+) as a cofactor.

It is found in the cytoplasm. The catalysed reaction is an N-acylneuraminate + CTP = a CMP-N-acyl-beta-neuraminate + diphosphate. Catalyzes the formation of CMP-N-acetylneuraminic acid (CMP-NeuNAc), which is essential for the formation of the capsule. The polypeptide is N-acylneuraminate cytidylyltransferase (neuA) (Streptococcus agalactiae serotype Ia (strain ATCC 27591 / A909 / CDC SS700)).